We begin with the raw amino-acid sequence, 356 residues long: Malate dehydrogenase, glyoxysomal (356 aa).

A glyoxysome-targeting transit peptide spans 1–36 (MQPIPDVNQRIARISAHLHPPKSQMEESSALRRANC). NAD(+) is bound by residues 51 to 57 (GAAGGIG) and Asp77. Substrate contacts are provided by Arg124 and Arg130. Residues Asn137 and 160-162 (ISN) each bind NAD(+). Substrate-binding residues include Asn162 and Arg196. The active-site Proton acceptor is His220. Met271 is an NAD(+) binding site.

Belongs to the LDH/MDH superfamily. MDH type 1 family. As to quaternary structure, homodimer.

The protein localises to the glyoxysome. It catalyses the reaction (S)-malate + NAD(+) = oxaloacetate + NADH + H(+). This Citrullus lanatus (Watermelon) protein is Malate dehydrogenase, glyoxysomal.